The chain runs to 385 residues: UPF0284 protein PMT9312_0438 (385 aa).

Belongs to the UPF0284 family.

This Prochlorococcus marinus (strain MIT 9312) protein is UPF0284 protein PMT9312_0438.